We begin with the raw amino-acid sequence, 409 residues long: Peptidase T (409 aa).

Residue His-78 participates in Zn(2+) binding. Asp-80 is a catalytic residue. A Zn(2+)-binding site is contributed by Asp-140. Glu-174 acts as the Proton acceptor in catalysis. 3 residues coordinate Zn(2+): Glu-175, Asp-197, and His-379.

It belongs to the peptidase M20B family. The cofactor is Zn(2+).

The protein localises to the cytoplasm. It catalyses the reaction Release of the N-terminal residue from a tripeptide.. Its function is as follows. Cleaves the N-terminal amino acid of tripeptides. In Vibrio parahaemolyticus serotype O3:K6 (strain RIMD 2210633), this protein is Peptidase T.